Consider the following 280-residue polypeptide: Pantothenate synthetase (280 aa).

31-38 (MGNLHAGH) lines the ATP pocket. His-38 acts as the Proton donor in catalysis. Gln-62 provides a ligand contact to (R)-pantoate. Residue Gln-62 participates in beta-alanine binding. 150–153 (GKKD) contacts ATP. Residue Gln-156 participates in (R)-pantoate binding. Residues Val-179 and 187–190 (MSSR) contribute to the ATP site.

Belongs to the pantothenate synthetase family. As to quaternary structure, homodimer.

The protein localises to the cytoplasm. It catalyses the reaction (R)-pantoate + beta-alanine + ATP = (R)-pantothenate + AMP + diphosphate + H(+). The protein operates within cofactor biosynthesis; (R)-pantothenate biosynthesis; (R)-pantothenate from (R)-pantoate and beta-alanine: step 1/1. Functionally, catalyzes the condensation of pantoate with beta-alanine in an ATP-dependent reaction via a pantoyl-adenylate intermediate. This Xanthomonas euvesicatoria pv. vesicatoria (strain 85-10) (Xanthomonas campestris pv. vesicatoria) protein is Pantothenate synthetase.